A 63-amino-acid chain; its full sequence is Large ribosomal subunit protein uL29 (63 aa).

It belongs to the universal ribosomal protein uL29 family.

The protein is Large ribosomal subunit protein uL29 of Shewanella frigidimarina (strain NCIMB 400).